Consider the following 201-residue polypeptide: Recombination protein RecR (201 aa).

The C4-type zinc finger occupies Cys58–Cys73. Residues Glu81–Pro178 form the Toprim domain.

It belongs to the RecR family.

Functionally, may play a role in DNA repair. It seems to be involved in an RecBC-independent recombinational process of DNA repair. It may act with RecF and RecO. The protein is Recombination protein RecR of Nitratidesulfovibrio vulgaris (strain DSM 19637 / Miyazaki F) (Desulfovibrio vulgaris).